Consider the following 244-residue polypeptide: Cyclin-Q (244 aa).

This sequence belongs to the cyclin family. Cyclin-like FAM58 subfamily.

In terms of biological role, may be an activating cyclin for the cyclin-associated kinase CDK10. This chain is Cyclin-Q (ccnq), found in Xenopus laevis (African clawed frog).